Here is a 191-residue protein sequence, read N- to C-terminus: Recombination protein RecR (191 aa).

The segment at 51-66 adopts a C4-type zinc-finger fold; sequence CQTCFHLSADPECEIC. In terms of domain architecture, Toprim spans 74–168; sequence GVICVVADSR…SVSRIAYGLP (95 aa).

Belongs to the RecR family.

Its function is as follows. May play a role in DNA repair. It seems to be involved in an RecBC-independent recombinational process of DNA repair. It may act with RecF and RecO. The protein is Recombination protein RecR of Synechococcus sp. (strain CC9605).